The sequence spans 77 residues: UPF0291 protein OB1671 (77 aa).

The segment at 56–77 is disordered; the sequence is DPEGKDVTPQKLRDYQDRNKKH. The segment covering 57-77 has biased composition (basic and acidic residues); the sequence is PEGKDVTPQKLRDYQDRNKKH.

It belongs to the UPF0291 family.

Its subcellular location is the cytoplasm. The sequence is that of UPF0291 protein OB1671 from Oceanobacillus iheyensis (strain DSM 14371 / CIP 107618 / JCM 11309 / KCTC 3954 / HTE831).